The chain runs to 122 residues: S-adenosylmethionine decarboxylase proenzyme (122 aa).

Catalysis depends on Ser-63, which acts as the Schiff-base intermediate with substrate; via pyruvic acid. Ser-63 is subject to Pyruvic acid (Ser); by autocatalysis. The Proton acceptor; for processing activity role is filled by His-68. Cys-83 acts as the Proton donor; for catalytic activity in catalysis.

It belongs to the prokaryotic AdoMetDC family. Type 1 subfamily. As to quaternary structure, heterotetramer of two alpha and two beta chains arranged as a dimer of alpha/beta heterodimers. Pyruvate serves as cofactor. Post-translationally, is synthesized initially as an inactive proenzyme. Formation of the active enzyme involves a self-maturation process in which the active site pyruvoyl group is generated from an internal serine residue via an autocatalytic post-translational modification. Two non-identical subunits are generated from the proenzyme in this reaction, and the pyruvate is formed at the N-terminus of the alpha chain, which is derived from the carboxyl end of the proenzyme. The post-translation cleavage follows an unusual pathway, termed non-hydrolytic serinolysis, in which the side chain hydroxyl group of the serine supplies its oxygen atom to form the C-terminus of the beta chain, while the remainder of the serine residue undergoes an oxidative deamination to produce ammonia and the pyruvoyl group blocking the N-terminus of the alpha chain.

The enzyme catalyses S-adenosyl-L-methionine + H(+) = S-adenosyl 3-(methylsulfanyl)propylamine + CO2. Its pathway is amine and polyamine biosynthesis; S-adenosylmethioninamine biosynthesis; S-adenosylmethioninamine from S-adenosyl-L-methionine: step 1/1. Its function is as follows. Catalyzes the decarboxylation of S-adenosylmethionine to S-adenosylmethioninamine (dcAdoMet), the propylamine donor required for the synthesis of the polyamines spermine and spermidine from the diamine putrescine. The polypeptide is S-adenosylmethionine decarboxylase proenzyme (Methanococcus vannielii (strain ATCC 35089 / DSM 1224 / JCM 13029 / OCM 148 / SB)).